The sequence spans 88 residues: Small ribosomal subunit protein uS17 (88 aa).

This sequence belongs to the universal ribosomal protein uS17 family. In terms of assembly, part of the 30S ribosomal subunit.

Its function is as follows. One of the primary rRNA binding proteins, it binds specifically to the 5'-end of 16S ribosomal RNA. This chain is Small ribosomal subunit protein uS17, found in Nitratidesulfovibrio vulgaris (strain DSM 19637 / Miyazaki F) (Desulfovibrio vulgaris).